Reading from the N-terminus, the 736-residue chain is Elongation factor 2 (736 aa).

Positions 18 to 234 constitute a tr-type G domain; sequence TRVRNIGIIA…VIDAYTASDK (217 aa). GTP-binding positions include 27-34, 93-97, and 147-150; these read AHVDHGKT, DTPGH, and NKVD. H603 is subject to Diphthamide.

It belongs to the TRAFAC class translation factor GTPase superfamily. Classic translation factor GTPase family. EF-G/EF-2 subfamily.

It localises to the cytoplasm. Its function is as follows. Catalyzes the GTP-dependent ribosomal translocation step during translation elongation. During this step, the ribosome changes from the pre-translocational (PRE) to the post-translocational (POST) state as the newly formed A-site-bound peptidyl-tRNA and P-site-bound deacylated tRNA move to the P and E sites, respectively. Catalyzes the coordinated movement of the two tRNA molecules, the mRNA and conformational changes in the ribosome. The polypeptide is Elongation factor 2 (Saccharolobus islandicus (strain Y.N.15.51 / Yellowstone #2) (Sulfolobus islandicus)).